Here is a 957-residue protein sequence, read N- to C-terminus: Nitrite reductase [NAD(P)H] large subunit (957 aa).

44–79 (YDRVHLTEYFAGRSAESLSLVEGDFFTQHGIELRLS) is a binding site for FAD. 193 to 225 (LREKISELGVGVHTSKATTEIVRNEQGLQLNFR) is an NAD(+) binding site. The [2Fe-2S] cluster site is built by Cys423, Cys425, Cys457, and Cys460. Cys639, Cys645, Cys679, and Cys683 together coordinate [4Fe-4S] cluster. Cys683 is a siroheme binding site.

Belongs to the nitrite and sulfite reductase 4Fe-4S domain family. As to quaternary structure, homodimer which associates with NirD. Siroheme serves as cofactor. Requires [2Fe-2S] cluster as cofactor. It depends on [4Fe-4S] cluster as a cofactor. FAD is required as a cofactor.

It carries out the reaction NH4(+) + 3 NADP(+) + 2 H2O = nitrite + 3 NADPH + 5 H(+). The catalysed reaction is NH4(+) + 3 NAD(+) + 2 H2O = nitrite + 3 NADH + 5 H(+). Its pathway is nitrogen metabolism; nitrate reduction (assimilation). This is Nitrite reductase [NAD(P)H] large subunit (nasB) from Klebsiella oxytoca.